We begin with the raw amino-acid sequence, 280 residues long: Acetylglutamate kinase (280 aa).

Residues 64–65 (GG), arginine 86, and asparagine 179 contribute to the substrate site.

Belongs to the acetylglutamate kinase family. ArgB subfamily.

It is found in the cytoplasm. The enzyme catalyses N-acetyl-L-glutamate + ATP = N-acetyl-L-glutamyl 5-phosphate + ADP. It participates in amino-acid biosynthesis; L-arginine biosynthesis; N(2)-acetyl-L-ornithine from L-glutamate: step 2/4. Catalyzes the ATP-dependent phosphorylation of N-acetyl-L-glutamate. This is Acetylglutamate kinase from Campylobacter fetus subsp. fetus (strain 82-40).